A 257-amino-acid chain; its full sequence is Acetylglutamate kinase (257 aa).

Substrate-binding positions include 43–44 (GG), Arg-65, and Asn-157. Residues 180 to 185 (DVSGIL) and 208 to 210 (IIT) each bind ATP.

The protein belongs to the acetylglutamate kinase family. ArgB subfamily. In terms of assembly, homodimer.

It is found in the cytoplasm. It catalyses the reaction N-acetyl-L-glutamate + ATP = N-acetyl-L-glutamyl 5-phosphate + ADP. It functions in the pathway amino-acid biosynthesis; L-arginine biosynthesis; N(2)-acetyl-L-ornithine from L-glutamate: step 2/4. Its function is as follows. Catalyzes the ATP-dependent phosphorylation of N-acetyl-L-glutamate. The polypeptide is Acetylglutamate kinase (Escherichia coli O139:H28 (strain E24377A / ETEC)).